Reading from the N-terminus, the 82-residue chain is Translational regulator CsrA (82 aa).

It belongs to the CsrA/RsmA family. As to quaternary structure, homodimer; the beta-strands of each monomer intercalate to form a hydrophobic core, while the alpha-helices form wings that extend away from the core.

It is found in the cytoplasm. Its function is as follows. A translational regulator that binds mRNA to regulate translation initiation and/or mRNA stability. Usually binds in the 5'-UTR at or near the Shine-Dalgarno sequence preventing ribosome-binding, thus repressing translation. Its main target seems to be the major flagellin gene, while its function is anatagonized by FliW. In Geobacillus kaustophilus (strain HTA426), this protein is Translational regulator CsrA.